Consider the following 111-residue polypeptide: MKKIYHIRKNWEFQAIINSKRQVISKNLIFYYQRNNTFKIGVSIPKKFAGAVKRNFYKRQIMAILRDIQDLTNLEYKIVMIVRKNFMALDFLEKKKEIQKMLERFKNEKRK.

Belongs to the RnpA family. As to quaternary structure, consists of a catalytic RNA component (M1 or rnpB) and a protein subunit.

It carries out the reaction Endonucleolytic cleavage of RNA, removing 5'-extranucleotides from tRNA precursor.. Its function is as follows. RNaseP catalyzes the removal of the 5'-leader sequence from pre-tRNA to produce the mature 5'-terminus. It can also cleave other RNA substrates such as 4.5S RNA. The protein component plays an auxiliary but essential role in vivo by binding to the 5'-leader sequence and broadening the substrate specificity of the ribozyme. In Mycoplasmopsis pulmonis (strain UAB CTIP) (Mycoplasma pulmonis), this protein is Ribonuclease P protein component.